We begin with the raw amino-acid sequence, 331 residues long: Sulfate/thiosulfate import ATP-binding protein CysA (331 aa).

The region spanning 2–232 (ITVTNARKNY…PANEFVMSFL (231 aa)) is the ABC transporter domain. 34–41 (GPSGSGKS) lines the ATP pocket.

This sequence belongs to the ABC transporter superfamily. Sulfate/tungstate importer (TC 3.A.1.6) family. The complex is composed of two ATP-binding proteins (CysA), two transmembrane proteins (CysT and CysW) and a solute-binding protein (CysP).

The protein localises to the cell membrane. It catalyses the reaction sulfate(out) + ATP + H2O = sulfate(in) + ADP + phosphate + H(+). It carries out the reaction thiosulfate(out) + ATP + H2O = thiosulfate(in) + ADP + phosphate + H(+). Its function is as follows. Part of the ABC transporter complex CysAWTP involved in sulfate/thiosulfate import. Responsible for energy coupling to the transport system. The polypeptide is Sulfate/thiosulfate import ATP-binding protein CysA (Nocardia farcinica (strain IFM 10152)).